Reading from the N-terminus, the 358-residue chain is DNA polymerase IV (358 aa).

Residues I4–G185 enclose the UmuC domain. 2 residues coordinate Mg(2+): D8 and D103. E104 is a catalytic residue.

This sequence belongs to the DNA polymerase type-Y family. Monomer. It depends on Mg(2+) as a cofactor.

It localises to the cytoplasm. The catalysed reaction is DNA(n) + a 2'-deoxyribonucleoside 5'-triphosphate = DNA(n+1) + diphosphate. In terms of biological role, poorly processive, error-prone DNA polymerase involved in untargeted mutagenesis. Copies undamaged DNA at stalled replication forks, which arise in vivo from mismatched or misaligned primer ends. These misaligned primers can be extended by PolIV. Exhibits no 3'-5' exonuclease (proofreading) activity. May be involved in translesional synthesis, in conjunction with the beta clamp from PolIII. This chain is DNA polymerase IV, found in Shewanella baltica (strain OS185).